Reading from the N-terminus, the 190-residue chain is Potassium-transporting ATPase KdpC subunit (190 aa).

A helical membrane pass occupies residues 11-31; it reads LIVLMSLITGVAYPLVVTGVA.

Belongs to the KdpC family. In terms of assembly, the system is composed of three essential subunits: KdpA, KdpB and KdpC.

It is found in the cell inner membrane. In terms of biological role, part of the high-affinity ATP-driven potassium transport (or Kdp) system, which catalyzes the hydrolysis of ATP coupled with the electrogenic transport of potassium into the cytoplasm. This subunit acts as a catalytic chaperone that increases the ATP-binding affinity of the ATP-hydrolyzing subunit KdpB by the formation of a transient KdpB/KdpC/ATP ternary complex. This Pseudomonas syringae pv. tomato (strain ATCC BAA-871 / DC3000) protein is Potassium-transporting ATPase KdpC subunit.